The primary structure comprises 921 residues: Leucine--tRNA ligase (921 aa).

The short motif at 41 to 52 is the 'HIGH' region element; sequence PYPSGSGLHVGH. The short motif at 695 to 699 is the 'KMSKS' region element; sequence KMSKS. Lys698 contributes to the ATP binding site.

The protein belongs to the class-I aminoacyl-tRNA synthetase family.

The protein resides in the cytoplasm. It catalyses the reaction tRNA(Leu) + L-leucine + ATP = L-leucyl-tRNA(Leu) + AMP + diphosphate. In Cytophaga hutchinsonii (strain ATCC 33406 / DSM 1761 / CIP 103989 / NBRC 15051 / NCIMB 9469 / D465), this protein is Leucine--tRNA ligase.